The primary structure comprises 154 residues: Superoxide dismutase [Cu-Zn] (154 aa).

3 residues coordinate Cu cation: H47, H49, and H64. A disulfide bridge connects residues C58 and C147. H64, H72, H81, and D84 together coordinate Zn(2+). A Cu cation-binding site is contributed by H121. Residue R144 coordinates substrate.

The protein belongs to the Cu-Zn superoxide dismutase family. As to quaternary structure, homodimer. Cu cation is required as a cofactor. The cofactor is Zn(2+).

The protein resides in the cytoplasm. The catalysed reaction is 2 superoxide + 2 H(+) = H2O2 + O2. In terms of biological role, destroys radicals which are normally produced within the cells and which are toxic to biological systems. This is Superoxide dismutase [Cu-Zn] (SOD1) from Podospora anserina (Pleurage anserina).